We begin with the raw amino-acid sequence, 35 residues long: Phospholipase A2 neuwieditoxin-1 (35 aa).

Ca(2+)-binding residues include Tyr-27, Gly-29, and Gly-31.

It belongs to the phospholipase A2 family. Group II subfamily. D49 sub-subfamily. Dimer. Ca(2+) is required as a cofactor. In terms of tissue distribution, expressed by the venom gland.

The protein localises to the secreted. It carries out the reaction a 1,2-diacyl-sn-glycero-3-phosphocholine + H2O = a 1-acyl-sn-glycero-3-phosphocholine + a fatty acid + H(+). Functionally, snake venom phospholipase A2 (PLA2) that shows presynaptic neurotoxicity. 10 ug/ml of this protein produce complete neuromuscular blockade up to 80 minutes, without inhibiting the responses to acetylcholine (ACh) and potassium chloride (KCl). In addition, it produces a calcium-dependent blockade of acetylcholine release and causes appearance of giant miniature end-plate potentials. PLA2 catalyzes the calcium-dependent hydrolysis of the 2-acyl groups in 3-sn-phosphoglycerides. This Bothrops pauloensis (Neuwied's lancehead) protein is Phospholipase A2 neuwieditoxin-1.